A 21-amino-acid polypeptide reads, in one-letter code: Dart gland peptide (21 aa).

The tract at residues 1-21 (SINNTGGSGNRRLDKNGFAGQ) is disordered. Asn-3 carries N-linked (GlcNAc...) asparagine glycosylation.

It localises to the secreted. This Cornu aspersum (Brown garden snail) protein is Dart gland peptide.